A 145-amino-acid chain; its full sequence is Basic phospholipase A2 cL037 (145 aa).

Positions 1 to 21 (MYPAHLLVLLAVCVSLLGASA) are cleaved as a signal peptide. A propeptide spanning residues 22–27 (ILPLPL) is cleaved from the precursor. 7 cysteine pairs are disulfide-bonded: Cys-38–Cys-98, Cys-54–Cys-144, Cys-56–Cys-72, Cys-71–Cys-125, Cys-78–Cys-118, Cys-87–Cys-111, and Cys-105–Cys-116. 3 residues coordinate Ca(2+): Tyr-55, Gly-57, and Gly-59. Residue His-75 is part of the active site. Asp-76 serves as a coordination point for Ca(2+). Asp-119 is an active-site residue.

The protein belongs to the phospholipase A2 family. Group I subfamily. D49 sub-subfamily. The cofactor is Ca(2+). In terms of tissue distribution, expressed by the venom gland.

The protein resides in the secreted. The catalysed reaction is a 1,2-diacyl-sn-glycero-3-phosphocholine + H2O = a 1-acyl-sn-glycero-3-phosphocholine + a fatty acid + H(+). In terms of biological role, PLA2 catalyzes the calcium-dependent hydrolysis of the 2-acyl groups in 3-sn-phosphoglycerides. This is Basic phospholipase A2 cL037 from Laticauda semifasciata (Black-banded sea krait).